Consider the following 509-residue polypeptide: H/ACA ribonucleoprotein complex subunit DKC1 (509 aa).

Positions 1-24 (MADAEVITFPKKHKKKKDRKPLQE) are disordered. N-acetylalanine is present on A2. Residues 2–21 (ADAEVITFPKKHKKKKDRKP) are nucleolar localization. Residues 10-19 (PKKHKKKKDR) are compositionally biased toward basic residues. Glycyl lysine isopeptide (Lys-Gly) (interchain with G-Cter in SUMO2) cross-links involve residues K20, K39, and K43. The Nucleophile role is filled by D125. Residue K191 forms a Glycyl lysine isopeptide (Lys-Gly) (interchain with G-Cter in SUMO2) linkage. Residues 297–372 (KRLVMKDSAV…VAKIKRVIME (76 aa)) form the PUA domain. S387 carries the post-translational modification Phosphoserine. K394 participates in a covalent cross-link: Glycyl lysine isopeptide (Lys-Gly) (interchain with G-Cter in SUMO2). K413 participates in a covalent cross-link: Glycyl lysine isopeptide (Lys-Gly) (interchain with G-Cter in SUMO1); alternate. K413 is covalently cross-linked (Glycyl lysine isopeptide (Lys-Gly) (interchain with G-Cter in SUMO2); alternate). K424 participates in a covalent cross-link: Glycyl lysine isopeptide (Lys-Gly) (interchain with G-Cter in SUMO2). The segment at 446–509 (KRKRDSESES…KVKVVEEMSE (64 aa)) is nuclear and nucleolar localization. The interval 447-509 (RKRDSESESD…KVKVVEEMSE (63 aa)) is disordered. Phosphoserine occurs at positions 451, 453, and 455. T458 is subject to Phosphothreonine. Positions 466 to 476 (EKKKKKDKKPK) are enriched in basic residues. S481 is modified (phosphoserine). At T485 the chain carries Phosphothreonine. S508 bears the Phosphoserine mark.

This sequence belongs to the pseudouridine synthase TruB family. Part of the H/ACA small nucleolar ribonucleoprotein (H/ACA snoRNP) complex, which contains NHP2/NOLA2, GAR1/NOLA1, NOP10/NOLA3, and DKC1/NOLA4, which is presumed to be the catalytic subunit. The complex contains a stable core formed by binding of one or two NOP10-DKC1 heterodimers to NHP2; GAR1 subsequently binds to this core via DKC1. The complex binds a box H/ACA small nucleolar RNA (snoRNA), which may target the specific site of modification within the RNA substrate. During assembly, the complex contains NAF1 instead of GAR1/NOLA1. The complex also interacts with TERC, which contains a 3'-terminal domain related to the box H/ACA snoRNAs. Specific interactions with snoRNAs or TERC are mediated by GAR1 and NHP2. Associates with NOLC1/NOPP140. H/ACA snoRNPs interact with the SMN complex, consisting of SMN1 or SMN2, GEMIN2/SIP1, DDX20/GEMIN3, and GEMIN4. This is mediated by interaction between GAR1 and SMN1 or SMN2. The SMN complex may be required for correct assembly of the H/ACA snoRNP complex. Component of the telomerase holoenzyme complex composed of one molecule of TERT, one molecule of WRAP53/TCAB1, two molecules of H/ACA ribonucleoprotein complex subunits DKC1, NOP10, NHP2 and GAR1, and a telomerase RNA template component (TERC). The telomerase holoenzyme complex is associated with TEP1, SMG6/EST1A and POT1. Interacts with SHQ1; this interaction may lead to the stabilization of DKC1, from the time of its synthesis until its association with NOP10, NHP2, and NAF1 at the nascent H/ACA RNA. Interacts with HMBOX1. Interacts with DHX36. In terms of tissue distribution, ubiquitously expressed, with elevated levels in Purkinje cells, the olfactory bulb, and Leydig cells of the testis.

The protein resides in the nucleus. It is found in the nucleolus. The protein localises to the cajal body. The enzyme catalyses uridine in 5S rRNA = pseudouridine in 5S rRNA. Functionally, catalytic subunit of H/ACA small nucleolar ribonucleoprotein (H/ACA snoRNP) complex, which catalyzes pseudouridylation of rRNA. This involves the isomerization of uridine such that the ribose is subsequently attached to C5, instead of the normal N1. Each rRNA can contain up to 100 pseudouridine ('psi') residues, which may serve to stabilize the conformation of rRNAs. Required for ribosome biogenesis and telomere maintenance. Also required for correct processing or intranuclear trafficking of TERC, the RNA component of the telomerase reverse transcriptase (TERT) holoenzyme. In Mus musculus (Mouse), this protein is H/ACA ribonucleoprotein complex subunit DKC1 (Dkc1).